The primary structure comprises 524 residues: L-tyrosine:2-oxoglutarate aminotransferase atrD (524 aa).

The protein belongs to the class-I pyridoxal-phosphate-dependent aminotransferase family. It depends on pyridoxal 5'-phosphate as a cofactor.

The catalysed reaction is L-tyrosine + 2-oxoglutarate = 3-(4-hydroxyphenyl)pyruvate + L-glutamate. It participates in secondary metabolite biosynthesis. Functionally, the L-tyrosine:2-oxoglutarate aminotransferase atrD and the atromentin synthetase atrA catalyze consecutive steps to turn over L-tyrosine into atromentin, which represents the generic precursor molecule for the entire terphenylquinone and pulvinic acid family of pigments, which are widely distributed secondary metabolites in homobasidiomycetes. The first step is catalyzed by atrD which converts L-tyrosine in to 4-hydroxyphenylpyruvate (4-HPP). Adenylation of two 4-HPP monomers by the atrA adenylation (A) domain, ester bond formation between monomers and atrA, and symmetric C-C-bond formation between two monomers by atrA leads to atromentin. The chain is L-tyrosine:2-oxoglutarate aminotransferase atrD from Tapinella panuoides (Oyster rollrim mushroom).